A 658-amino-acid chain; its full sequence is MNLNLIFKEQTLKFNKEEQETYLFLQQHNSDWANIFKEMILQGRDKVTQRLVTSMHRENLVKARTQSKKILSRDLIMLDISTTHILEIQFPQAKQTLYAPITGEHAFDRIDVEGPFYIKDDITNTITRVHHPNEILECILIEAPDLKNAASDQFQQDLINSATNMTFAISYQALSMQHDSAPLFNIIENSEDSYLRSEQAVIEGHPLHPGAKLRKGLNALQTFLYSSEFNQPIKLKIVLIHSKLSRTMSLSKDYDTTVHQLFPDLIKQLENEFTPKFNFNDYHIMIVHPWQLDDVLHSDYQAEVDKELIIEAKHTLDYYAGLSFRTLVPKYPAMSPHIKLSTNVHITGEIRTLSEQTTHNGPLMTRILNDILEKDVIFKSYASTIIDEVAGIHFYNEQDEADYQTERSEQLGTLFRKNIYQMIPQEVTPLIPSSLVATYPFNNESPIVTLIKRYQSAASLSDFESSAKSWVETYSKALLGLVIPLVTKYGIALEAHLQNAIATFRKDGLLDTMYIRDFEGLRIDKAQLNEMVYSTSHFHEKSRILTDSKTSVFNKAFYSTVQNHLGELILTISKASNDSNLERHMWYIVRDVLDNIFDQLVLSTHKSNQVNENRINEIKDTMFAPFIDYKCVTTMRLEDEAHHYTYIKVNNPLYRENN.

It belongs to the IucA/IucC family.

The enzyme catalyses D-ornithine + citrate + ATP = N(5)-[(S)-citryl]-D-ornithine + AMP + diphosphate + H(+). Its pathway is siderophore biosynthesis. In terms of biological role, involved in the biosynthesis of the siderophore staphyloferrin A. Catalyzes the ATP-dependent condensation of D-ornithine and citrate to form a citryl-D-ornithine intermediate. The polypeptide is D-ornithine--citrate ligase (Staphylococcus aureus (strain NCTC 8325 / PS 47)).